The following is a 64-amino-acid chain: Small ribosomal subunit protein eS17 (64 aa).

It belongs to the eukaryotic ribosomal protein eS17 family.

In Methanocorpusculum labreanum (strain ATCC 43576 / DSM 4855 / Z), this protein is Small ribosomal subunit protein eS17.